Reading from the N-terminus, the 621-residue chain is Kelch-like protein 40 (621 aa).

The region spanning 33-98 (LDCVVRAGER…LYTSEIALDE (66 aa)) is the BTB domain. Residues 133 to 239 (CLAVFRLGLL…PRAFLESRVE (107 aa)) form the BACK domain. The interval 265-295 (ITTLRKKKKGKDGAGAKEADKGTSKAKAEED) is disordered. Positions 275–292 (KDGAGAKEADKGTSKAKA) are enriched in basic and acidic residues. Kelch repeat units follow at residues 360–412 (QVFV…EALN), 413–462 (SIYV…SHMD), 463–510 (LVYV…VHDG), 512–557 (IIVA…SLVG), and 559–613 (LYAI…PVRL).

Belongs to the KLHL40 family. As to quaternary structure, component of the BCR(KLHL40) E3 ubiquitin ligase complex, at least composed of CUL3, KLHL40 and RBX1. Interacts with LMOD3. Highly expressed in fetal (19, 23 and 31 weeks of gestation) and adult skeletal muscle; expression levels tend to be higher in fetal compared to postnatal muscles (at protein level). Also expressed in fetal and adult heart.

It localises to the cytoplasm. Its subcellular location is the myofibril. The protein localises to the sarcomere. The protein resides in the a band. It is found in the i band. Functionally, substrate-specific adapter of a BCR (BTB-CUL3-RBX1) E3 ubiquitin ligase complex that acts as a key regulator of skeletal muscle development. The BCR(KLHL40) complex acts by mediating ubiquitination and degradation of TFDP1, thereby regulating the activity of the E2F:DP transcription factor complex. Promotes stabilization of LMOD3 by acting as a negative regulator of LMOD3 ubiquitination; the molecular process by which it negatively regulates ubiquitination of LMOD3 is however unclear. The polypeptide is Kelch-like protein 40 (Homo sapiens (Human)).